Reading from the N-terminus, the 425-residue chain is Tyrosine--tRNA ligase (425 aa).

Tyr-34 lines the L-tyrosine pocket. The short motif at 39 to 48 is the 'HIGH' region element; that stretch reads PTADSLHVGN. L-tyrosine contacts are provided by Tyr-171 and Gln-175. Positions 231–235 match the 'KMSKS' region motif; sequence KYGKS. Residue Lys-234 coordinates ATP. In terms of domain architecture, S4 RNA-binding spans 358-424; sequence APLVELLVHA…GKRTYTVVKI (67 aa).

This sequence belongs to the class-I aminoacyl-tRNA synthetase family. TyrS type 1 subfamily. Homodimer.

The protein localises to the cytoplasm. It catalyses the reaction tRNA(Tyr) + L-tyrosine + ATP = L-tyrosyl-tRNA(Tyr) + AMP + diphosphate + H(+). Catalyzes the attachment of tyrosine to tRNA(Tyr) in a two-step reaction: tyrosine is first activated by ATP to form Tyr-AMP and then transferred to the acceptor end of tRNA(Tyr). The chain is Tyrosine--tRNA ligase from Opitutus terrae (strain DSM 11246 / JCM 15787 / PB90-1).